The following is a 260-amino-acid chain: Tropinone reductase 2 (260 aa).

13-37 (LVTGGSRGIGYGIVEELANLGASVY) is a binding site for NADP(+). A substrate-binding site is contributed by serine 146. Tyrosine 159 (proton acceptor) is an active-site residue.

Belongs to the short-chain dehydrogenases/reductases (SDR) family.

The enzyme catalyses pseudotropine + NADP(+) = tropinone + NADPH + H(+). The protein operates within alkaloid biosynthesis; tropane alkaloid biosynthesis. Functionally, catalyzes the stereospecific reduction of tropinone to pseudotropine. This Hyoscyamus niger (Black henbane) protein is Tropinone reductase 2 (TR2).